Here is a 184-residue protein sequence, read N- to C-terminus: Large ribosomal subunit protein uL15 (184 aa).

Residues 1–45 are disordered; sequence MNLSSLRPAKGSVRNKKRVGRGQGSGNGTTAGKGNKGQQARSGYK. Residues 21-35 are compositionally biased toward gly residues; the sequence is RGQGSGNGTTAGKGN.

Belongs to the universal ribosomal protein uL15 family. As to quaternary structure, part of the 50S ribosomal subunit.

Its function is as follows. Binds to the 23S rRNA. In Chlorobium chlorochromatii (strain CaD3), this protein is Large ribosomal subunit protein uL15.